The chain runs to 434 residues: UDP-N-acetylglucosamine 1-carboxyvinyltransferase 1 (434 aa).

Residue 22–23 (KN) coordinates phosphoenolpyruvate. Residue R93 coordinates UDP-N-acetyl-alpha-D-glucosamine. C117 acts as the Proton donor in catalysis. 2-(S-cysteinyl)pyruvic acid O-phosphothioketal is present on C117. UDP-N-acetyl-alpha-D-glucosamine is bound by residues 122–126 (RPIDQ), D306, and V328.

Belongs to the EPSP synthase family. MurA subfamily.

It is found in the cytoplasm. The enzyme catalyses phosphoenolpyruvate + UDP-N-acetyl-alpha-D-glucosamine = UDP-N-acetyl-3-O-(1-carboxyvinyl)-alpha-D-glucosamine + phosphate. The protein operates within cell wall biogenesis; peptidoglycan biosynthesis. Functionally, cell wall formation. Adds enolpyruvyl to UDP-N-acetylglucosamine. The polypeptide is UDP-N-acetylglucosamine 1-carboxyvinyltransferase 1 (Bacillus cereus (strain ATCC 14579 / DSM 31 / CCUG 7414 / JCM 2152 / NBRC 15305 / NCIMB 9373 / NCTC 2599 / NRRL B-3711)).